The following is a 52-amino-acid chain: Large ribosomal subunit protein bL33 (52 aa).

Belongs to the bacterial ribosomal protein bL33 family.

The polypeptide is Large ribosomal subunit protein bL33 (Anaeromyxobacter dehalogenans (strain 2CP-C)).